We begin with the raw amino-acid sequence, 440 residues long: uncharacterized protein (440 aa).

This is an uncharacterized protein from Saccharolobus islandicus (Sulfolobus islandicus).